We begin with the raw amino-acid sequence, 1459 residues long: DNA-binding protein RFX7 (1459 aa).

The interval 1–27 (MAEEQQQPPPQQLDAPQQLPLSAPNPG) is disordered. Residues 12-21 (QLDAPQQLPL) are compositionally biased toward low complexity. The RFX-type winged-helix DNA-binding region spans 108 to 183 (AFSWIRNTLE…YCYSGLRKKA (76 aa)). Positions 188 to 193 (PTLPNL) match the PxLPxI/L motif; mediates interaction with ANKRA2 and RFXANK motif. Disordered stretches follow at residues 303 to 347 (AKQQ…LPNG), 404 to 428 (SVKQ…ARHR), 482 to 590 (PSNS…GVTE), 634 to 659 (FTST…SPRK), 688 to 716 (GQKP…AQIP), and 918 to 1016 (SVTP…VPPS). Polar residues-rich tracts occupy residues 404-416 (SVKQ…QNVP) and 482-502 (PSNS…TGTT). A compositionally biased stretch (low complexity) spans 521 to 534 (SPGSRASSTGGTSA). Residues 537 to 549 (VKMEPEGSSDEHP) are compositionally biased toward basic and acidic residues. Polar residues-rich tracts occupy residues 562–578 (PLTT…NTDG), 634–645 (FTSTSSPSNGDS), and 706–716 (TESSTAGAQIP). Residues 947 to 963 (TPTPTPTPTPTPTPTPT) are compositionally biased toward pro residues. Positions 971-1009 (GSQSLSRESPCSRLAQTTPVDSALGSSRHTPIGTPHSNC) are enriched in polar residues.

The protein belongs to the RFX family. As to quaternary structure, interacts (via PxLPxI/L motif) with RFXANK (via ankyrin repeats). Interacts (via PxLPxI/L motif) with ANKRA2 (via ankyrin repeats). As to expression, expressed in spleen and lymph node and to a lower extend in brain (at protein level). Expressed in lymphoid organs and lymphoid cell subsets. Expressed throughout natural killer (NK) cell maturation.

It is found in the nucleus. Transcription factor. Acts as a transcriptional activator by binding to promoter regions of target genes, such as Rec8, Mxd4 and Ddit4. Plays a role in natural killer (NK) cell maintenance and immunity. May play a role in the process of ciliogenesis in the neural tube and neural tube closure. This chain is DNA-binding protein RFX7, found in Mus musculus (Mouse).